The chain runs to 1902 residues: PII-type proteinase (1902 aa).

The signal sequence occupies residues Met1 to Ala33. A propeptide spanning residues Ala34 to Thr187 is cleaved from the precursor. Residues Ala191–Ile697 enclose the Peptidase S8 domain. Residues Asp217, His281, and Ser620 each act as charge relay system in the active site. The tract at residues Gly1796 to Thr1874 is disordered. Residues Lys1797–Gly1812 are compositionally biased toward gly residues. Positions Ser1830–Ala1843 are enriched in polar residues. An LPXTG sorting signal motif is present at residues Leu1867 to Gly1871. Thr1870 carries the pentaglycyl murein peptidoglycan amidated threonine modification. Residues Gly1871 to Glu1902 constitute a propeptide, removed by sortase.

Belongs to the peptidase S8 family.

Its subcellular location is the secreted. The protein resides in the cell wall. The catalysed reaction is Endopeptidase activity with very broad specificity, although some subsite preference have been noted, e.g. large hydrophobic residues in the P1 and P4 positions, and Pro in the P2 position. Best known for its action on caseins, although it has been shown to hydrolyze hemoglobin and oxidized insulin B-chain.. Its function is as follows. Protease which breaks down milk proteins during the growth of the bacteria on milk. This is PII-type proteinase (prt) from Lactococcus lactis subsp. cremoris (Streptococcus cremoris).